Reading from the N-terminus, the 158-residue chain is NKG2-F type II integral membrane protein (158 aa).

The span at 1-12 shows a compositional bias: polar residues; sequence MNKQRGTYSEVS. Residues 1–30 form a disordered region; it reads MNKQRGTYSEVSLAQDPKRQQRKLKGNKSS. At 1-74 the chain is on the cytoplasmic side; that stretch reads MNKQRGTYSE…LPPPERLTAE (74 aa). The helical transmembrane segment at 75-95 threads the bilayer; sequence VLGIICIVLMATVLKTIVLIP. Residues 96 to 158 lie on the Extracellular side of the membrane; sequence CIGVLEQNNF…VLQRTLICFL (63 aa).

As to quaternary structure, can form disulfide-bonded heterodimer with CD94. Natural killer cells.

It is found in the membrane. May play a role as a receptor for the recognition of MHC class I HLA-E molecules by NK cells. The polypeptide is NKG2-F type II integral membrane protein (KLRC4) (Pan troglodytes (Chimpanzee)).